We begin with the raw amino-acid sequence, 61 residues long: Short neurotoxin 2 (61 aa).

4 disulfide bridges follow: C3/C23, C17/C40, C42/C53, and C54/C59.

It belongs to the three-finger toxin family. Short-chain subfamily. Type I alpha-neurotoxin sub-subfamily. Expressed by the venom gland.

Its subcellular location is the secreted. Functionally, binds to muscle nicotinic acetylcholine receptor (nAChR) and inhibit acetylcholine from binding to the receptor, thereby impairing neuromuscular transmission. This chain is Short neurotoxin 2, found in Hemachatus haemachatus (Rinkhals).